The following is a 94-amino-acid chain: Co-chaperonin GroES (94 aa).

This sequence belongs to the GroES chaperonin family. In terms of assembly, heptamer of 7 subunits arranged in a ring. Interacts with the chaperonin GroEL.

Its subcellular location is the cytoplasm. Its function is as follows. Together with the chaperonin GroEL, plays an essential role in assisting protein folding. The GroEL-GroES system forms a nano-cage that allows encapsulation of the non-native substrate proteins and provides a physical environment optimized to promote and accelerate protein folding. GroES binds to the apical surface of the GroEL ring, thereby capping the opening of the GroEL channel. The chain is Co-chaperonin GroES from Bacillus sp. (strain PS3).